The sequence spans 55 residues: Large ribosomal subunit protein bL33 (55 aa).

It belongs to the bacterial ribosomal protein bL33 family.

The chain is Large ribosomal subunit protein bL33 from Micrococcus luteus (strain ATCC 4698 / DSM 20030 / JCM 1464 / CCM 169 / CCUG 5858 / IAM 1056 / NBRC 3333 / NCIMB 9278 / NCTC 2665 / VKM Ac-2230) (Micrococcus lysodeikticus).